The sequence spans 114 residues: Small ribosomal subunit protein bS6 (114 aa).

It belongs to the bacterial ribosomal protein bS6 family.

Its function is as follows. Binds together with bS18 to 16S ribosomal RNA. The chain is Small ribosomal subunit protein bS6 from Phocaeicola vulgatus (strain ATCC 8482 / DSM 1447 / JCM 5826 / CCUG 4940 / NBRC 14291 / NCTC 11154) (Bacteroides vulgatus).